The following is a 265-amino-acid chain: Phosphate import ATP-binding protein PstB 2 (265 aa).

The region spanning 13–260 is the ABC transporter domain; the sequence is FRTENLNVYY…PTKQATRDYV (248 aa). 45 to 52 provides a ligand contact to ATP; that stretch reads GPSGCGKS.

It belongs to the ABC transporter superfamily. Phosphate importer (TC 3.A.1.7) family. In terms of assembly, the complex is composed of two ATP-binding proteins (PstB), two transmembrane proteins (PstC and PstA) and a solute-binding protein (PstS).

The protein resides in the cell inner membrane. It catalyses the reaction phosphate(out) + ATP + H2O = ADP + 2 phosphate(in) + H(+). In terms of biological role, part of the ABC transporter complex PstSACB involved in phosphate import. Responsible for energy coupling to the transport system. The chain is Phosphate import ATP-binding protein PstB 2 from Synechococcus sp. (strain JA-3-3Ab) (Cyanobacteria bacterium Yellowstone A-Prime).